Here is a 327-residue protein sequence, read N- to C-terminus: Biotin synthase (327 aa).

One can recognise a Radical SAM core domain in the interval 52–279; that stretch reads TKVQLSTLVS…ASYVRLSAGR (228 aa). Residues Cys-67, Cys-71, and Cys-74 each contribute to the [4Fe-4S] cluster site. Positions 111, 142, 202, and 274 each coordinate [2Fe-2S] cluster.

It belongs to the radical SAM superfamily. Biotin synthase family. Homodimer. Requires [4Fe-4S] cluster as cofactor. The cofactor is [2Fe-2S] cluster.

The catalysed reaction is (4R,5S)-dethiobiotin + (sulfur carrier)-SH + 2 reduced [2Fe-2S]-[ferredoxin] + 2 S-adenosyl-L-methionine = (sulfur carrier)-H + biotin + 2 5'-deoxyadenosine + 2 L-methionine + 2 oxidized [2Fe-2S]-[ferredoxin]. The protein operates within cofactor biosynthesis; biotin biosynthesis; biotin from 7,8-diaminononanoate: step 2/2. Functionally, catalyzes the conversion of dethiobiotin (DTB) to biotin by the insertion of a sulfur atom into dethiobiotin via a radical-based mechanism. The polypeptide is Biotin synthase (Chromobacterium violaceum (strain ATCC 12472 / DSM 30191 / JCM 1249 / CCUG 213 / NBRC 12614 / NCIMB 9131 / NCTC 9757 / MK)).